Reading from the N-terminus, the 100-residue chain is Urease subunit gamma (100 aa).

The protein belongs to the urease gamma subunit family. In terms of assembly, heterotrimer of UreA (gamma), UreB (beta) and UreC (alpha) subunits. Three heterotrimers associate to form the active enzyme.

The protein resides in the cytoplasm. The enzyme catalyses urea + 2 H2O + H(+) = hydrogencarbonate + 2 NH4(+). It participates in nitrogen metabolism; urea degradation; CO(2) and NH(3) from urea (urease route): step 1/1. The chain is Urease subunit gamma from Vibrio parahaemolyticus.